The primary structure comprises 200 residues: Dephospho-CoA kinase (200 aa).

One can recognise a DPCK domain in the interval 4–200 (VIGLTGGIAS…VILKKWNIID (197 aa)). 12–17 (ASGKST) provides a ligand contact to ATP.

The protein belongs to the CoaE family.

The protein localises to the cytoplasm. It carries out the reaction 3'-dephospho-CoA + ATP = ADP + CoA + H(+). Its pathway is cofactor biosynthesis; coenzyme A biosynthesis; CoA from (R)-pantothenate: step 5/5. Functionally, catalyzes the phosphorylation of the 3'-hydroxyl group of dephosphocoenzyme A to form coenzyme A. This Bacillus cereus (strain ATCC 14579 / DSM 31 / CCUG 7414 / JCM 2152 / NBRC 15305 / NCIMB 9373 / NCTC 2599 / NRRL B-3711) protein is Dephospho-CoA kinase.